An 872-amino-acid polypeptide reads, in one-letter code: DNA mismatch repair protein MutS (872 aa).

602–609 (GPNMSGKS) is a binding site for ATP.

This sequence belongs to the DNA mismatch repair MutS family.

Its function is as follows. This protein is involved in the repair of mismatches in DNA. It is possible that it carries out the mismatch recognition step. This protein has a weak ATPase activity. The chain is DNA mismatch repair protein MutS from Staphylococcus aureus (strain Mu3 / ATCC 700698).